The chain runs to 591 residues: Max-binding protein MNT (591 aa).

At Ser-2 the chain carries N-acetylserine. 2 disordered regions span residues 17-122 (AQQQ…APRQ) and 182-223 (PGVQ…GIGT). Residues 22–44 (RAREEQERLRLEREREREQEQKR) show a composition bias toward basic and acidic residues. 2 stretches are compositionally biased toward pro residues: residues 63–84 (EAPP…PLAT) and 102–120 (SLPP…PLAP). The span at 205–216 (PAEEAKSSEQKK) shows a compositional bias: basic and acidic residues. The bHLH domain occupies 222 to 273 (GTREVHNKLEKNRRAHLKECFETLKRNIPNVDDKKTSNLSVLRTALRYIQSL). The tract at residues 273 to 301 (LKRKEKEYEHEMERLAREKIATQQRLAEL) is leucine-zipper. Positions 321–426 (TGQPEDDQAS…PPPATPTQTL (106 aa)) are disordered. The span at 336 to 346 (EGEDNVDEEME) shows a compositional bias: acidic residues. A compositionally biased stretch (pro residues) spans 374–383 (STAPAPLPTH). The span at 390 to 411 (PVALSPAHLPVQQQQPPQQKTP) shows a compositional bias: low complexity. Residues 412–421 (LPAPPPPPAT) are compositionally biased toward pro residues.

Efficient DNA binding requires dimerization with another bHLH protein. Binds DNA as a homodimer or a heterodimer with MAX.

It localises to the nucleus. In terms of biological role, binds DNA as a heterodimer with MAX and represses transcription. Binds to the canonical E box sequence 5'-CACGTG-3' and, with higher affinity, to 5'-CACGCG-3'. The polypeptide is Max-binding protein MNT (Mnt) (Mus musculus (Mouse)).